The following is a 1161-amino-acid chain: MVTTIVIACTFRAGTTHHSWCAAVALRAGSFAADDKSLLARFYHADRALTAIASELDSFDGRAEPVRCTRLVSRLRQGQDRVLAITNQIMDELLGDDRAQRAFRVKFPEEVLQESLAGQLWFGAECLAAGSSILNREAESAKMRPLAKAVTKSLEIVRNRLREQCLRNNTPNSPTLRLDINDAATEQLYESLKIFDRLFAEFELVYVSAMVQVKTKQEYEMQELICVLFSETLQRALKTGLLEQEQVDSYDPALMFSIPRLAIIAGLVIFREGPLNMDQPADNISEMFRPFRKLLIKMRDLLHALTKQELYQLEKLLCTNEEISASEQLICDEKGRSGGDGGSGSGGTAAAGVKEFDALEPVGESQEHVVIVTTVTTTNAPNVVGDGPGATGCTDATSGADGRLHIVSQGYGVSTGATGSSGFGSGRGGCSSSSTSRPKQRHNQAHLRQRGAPRHSSQSFAPEASYAGDDREPVVEEDNNNHLRKEIEEEDVDDDMEEEEEDEEEDEVDDDAMLKDGLVTTDCASGYLIPNTNFGNLLQTNEAPLTDSFIATDDELRLLGAETASSPPAMTQANIDSILAASAAGSGGQQQQQQQQQLIDSDSGHGTANHSTDMSPELETERTVVAAGQPNANDAPLDGSVSKQQPVRDRSRSGSSTVHKHAEISESSSDYEEADVDDEPDDVDADDDDEEEDDVVGEVEEQNDSEPTFNRKVGGAPKEAFRSQLRCKAARNHRKSSHHRPRPSTSSSSSSAAYRNKSQSHQHHHHHHHHHHHSYAESAEGTSSVVSTITTSNNSTSNGSTRHHSRMQQQHQQHQQQRNSSSSCDTSPTQSECSDAQEVALAIRAAGRNKFKSTENLLHRLFVCIAGVADQLQTNFAADLRKMLRSVFIMNSSPPEPDEPPEPSGSEEESKDSQHNHPSDLFEFRASEQDVITADQQNHSGGSSQSIYSAEEANPEQDSVFGSSGDSSPVRRTASVESRNVTVNVSVSVVASSPVGAGGAGGGGMVGGSRTGQERSVSLSEACIVVEGGKASAGGGGGTRRHSASGSKNDYGRSRSSPSSPVNSNTGGGGGGNHHSSAHHTAHEQQRRMPEEPPRWIPDCDAPRCMACASAFTPFRRRHHCRNCGGVFCGVCSNLSKPLPKYGLTKAVRVCRDCYIHEVGV.

6 disordered regions span residues 417–510, 583–831, 890–918, 935–978, 992–1014, and 1029–1095; these read ATGS…EVDD, AAGS…PTQS, MNSSPPEPDEPPEPSGSEEESKDSQHNHP, DQQN…SVES, SSPVGAGGAGGGGMVGGSRTGQE, and GKAS…EPPR. Residues 419–429 are compositionally biased toward gly residues; sequence GSSGFGSGRGG. The segment covering 438–453 has biased composition (basic residues); sequence PKQRHNQAHLRQRGAP. Residues 468 to 487 show a composition bias toward basic and acidic residues; sequence GDDREPVVEEDNNNHLRKEI. Residues 488–510 show a composition bias toward acidic residues; it reads EEEDVDDDMEEEEEDEEEDEVDD. Residues 583–601 show a composition bias toward low complexity; the sequence is AAGSGGQQQQQQQQQLIDS. Positions 669–704 are enriched in acidic residues; the sequence is SDYEEADVDDEPDDVDADDDDEEEDDVVGEVEEQND. Over residues 728 to 742 the composition is skewed to basic residues; it reads KAARNHRKSSHHRPR. Over residues 743–757 the composition is skewed to low complexity; sequence PSTSSSSSSAAYRNK. Basic residues predominate over residues 758–773; it reads SQSHQHHHHHHHHHHH. 2 stretches are compositionally biased toward low complexity: residues 781-800 and 807-831; these read GTSSVVSTITTSNNSTSNGS and MQQQHQQHQQQRNSSSSCDTSPTQS. Residues 896-910 show a composition bias toward acidic residues; that stretch reads EPDEPPEPSGSEEES. Polar residues-rich tracts occupy residues 935 to 948 and 956 to 967; these read DQQNHSGGSSQSIY and EQDSVFGSSGDS. The span at 996-1010 shows a compositional bias: gly residues; that stretch reads GAGGAGGGGMVGGSR. Residues 1054 to 1065 show a composition bias toward low complexity; the sequence is SRSSPSSPVNSN. Over residues 1081–1094 the composition is skewed to basic and acidic residues; it reads TAHEQQRRMPEEPP. Residues 1099–1159 form an FYVE-type zinc finger; sequence DCDAPRCMAC…VCRDCYIHEV (61 aa). Zn(2+) is bound by residues Cys1105, Cys1108, Cys1121, Cys1124, Cys1129, Cys1132, Cys1151, and Cys1154.

The protein belongs to the lst-2 family.

Its function is as follows. Negative regulator of epidermal growth factor receptor (EGFR) signaling. This Anopheles gambiae (African malaria mosquito) protein is Lateral signaling target protein 2 homolog.